The chain runs to 305 residues: Testis-expressed protein 52 (305 aa).

The interval 284–305 (HLSKAQASKSPARKRKRRPGHF) is disordered. Over residues 294–305 (PARKRKRRPGHF) the composition is skewed to basic residues.

Expressed in Testis.

This Homo sapiens (Human) protein is Testis-expressed protein 52.